Here is a 1363-residue protein sequence, read N- to C-terminus: Vascular endothelial growth factor receptor 3 (1363 aa).

A signal peptide spans 1–24 (MQPGAALNRRLWLCLGLLQGLANG). Residues 25-775 (YSMTPPTLNI…EGSEDKGSME (751 aa)) lie on the Extracellular side of the membrane. N33, N104, N166, N251, N299, and N411 each carry an N-linked (GlcNAc...) asparagine glycan. Ig-like C2-type domains follow at residues 44–118 (GDSL…YIKA), 151–213 (KDSM…WGDQ), 230–326 (YDIQ…TEVI), 331–415 (PFIS…ISLE), 422–552 (PHIH…FYVT), 555–671 (PDGF…KYLS), and 678–764 (PRLT…ASVA). 2 disulfide bridges follow: C51–C111 and C158–C206. Cysteines 252 and 310 form a disulfide. 3 disulfide bridges follow: C445–C534, C466–C486, and C578–C653. 5 N-linked (GlcNAc...) asparagine glycosylation sites follow: N515, N527, N582, N594, and N683. A disulfide bond links C699 and C751. N-linked (GlcNAc...) asparagine glycosylation is present at N758. Residues 776–796 (IVILIGTGVIAVFFWVLLLLI) traverse the membrane as a helical segment. The Cytoplasmic portion of the chain corresponds to 797-1363 (FCNMKRPAHA…GSTFFADSNY (567 aa)). Phosphotyrosine; by SRC is present on residues Y830 and Y833. The Protein kinase domain occupies 845-1173 (LHLGRVLGHG…DLVEILGDLL (329 aa)). ATP contacts are provided by residues 851 to 859 (LGHGAFGKV) and K879. D1037 serves as the catalytic Proton acceptor. Y1063 is subject to Phosphotyrosine; by autocatalysis and SRC. Phosphotyrosine; by autocatalysis is present on residues Y1068, Y1230, Y1231, and Y1265. The span at 1289–1317 (SRHRQEGSFSRKDPGQHMDISRGHPDLQG) shows a compositional bias: basic and acidic residues. A disordered region spans residues 1289–1330 (SRHRQEGSFSRKDPGQHMDISRGHPDLQGRRRRPTQGAQGGK). Y1333 and Y1337 each carry phosphotyrosine; by autocatalysis and SRC. Phosphotyrosine; by autocatalysis is present on Y1363.

It belongs to the protein kinase superfamily. Tyr protein kinase family. CSF-1/PDGF receptor subfamily. Interacts with VEGFC and VEGFD. Monomer in the absence of bound VEGFC or VEGFD. Homodimer in the presence of bound VEGFC or VEGFD. Can also form a heterodimer with KDR. Interacts with PTPN14; the interaction is enhanced by stimulation with VEGFC. Interacts with CRK, GRB2, PTK2/FAK1, SHC1, PIK3R1 and PTPN11/SHP-2. Identified in a complex with SRC and ITGB1. Identified in a complex with SRC and ITGB1. Post-translationally, autophosphorylated on tyrosine residues upon ligand binding. Autophosphorylation occurs in trans, i.e. one subunit of the dimeric receptor phosphorylates tyrosine residues on the other subunit. Phosphorylation in response to H(2)O(2) is mediated by a process that requires SRC and PRKCD activity. Phosphorylation at Tyr-1068 is required for autophosphorylation at additional tyrosine residues. Phosphorylation at Tyr-1063 and Tyr-1337 is important for interaction with CRK and subsequent activation of MAPK8. Phosphorylation at Tyr-1230, Tyr-1231 and Tyr-1337 is important for interaction with GRB2 and subsequent activation of the AKT1 and MAPK1/ERK2 and/or MAPK3/ERK1 signaling pathways. In response to endothelial cell adhesion onto collagen, can also be phosphorylated in the absence of FLT4 kinase activity by SRC.

The protein resides in the cell membrane. Its subcellular location is the cytoplasm. It is found in the nucleus. The catalysed reaction is L-tyrosyl-[protein] + ATP = O-phospho-L-tyrosyl-[protein] + ADP + H(+). Its activity is regulated as follows. Present in an inactive conformation in the absence of bound ligand. Binding of VEGFC or VEGFD leads to dimerization and activation by autophosphorylation on tyrosine residues. Its function is as follows. Tyrosine-protein kinase that acts as a cell-surface receptor for VEGFC and VEGFD, and plays an essential role in adult lymphangiogenesis and in the development of the vascular network and the cardiovascular system during embryonic development. Promotes proliferation, survival and migration of endothelial cells, and regulates angiogenic sprouting. Signaling by activated FLT4 leads to enhanced production of VEGFC, and to a lesser degree VEGFA, thereby creating a positive feedback loop that enhances FLT4 signaling. Modulates KDR signaling by forming heterodimers. Mediates activation of the MAPK1/ERK2, MAPK3/ERK1 signaling pathway, of MAPK8 and the JUN signaling pathway, and of the AKT1 signaling pathway. Phosphorylates SHC1. Mediates phosphorylation of PIK3R1, the regulatory subunit of phosphatidylinositol 3-kinase. Promotes phosphorylation of MAPK8 at 'Thr-183' and 'Tyr-185', and of AKT1 at 'Ser-473'. The chain is Vascular endothelial growth factor receptor 3 (Flt4) from Rattus norvegicus (Rat).